Reading from the N-terminus, the 355-residue chain is MVSEAPPFWWRKPDWRAWGLSPFSFLYGRVAGHRMVHGRRASVPVPVICVGNFTVGGAGKTPTALALARAAKTKGLKPGFLSRGYGGSLDVTTVVDPHDHHATAVGDEPLLLAREALTVIARRRADGAERLVREGADLIIMDDGFQSAQLAIDYALVVIDATRGIGNGHLVPGGPVRAPLRTQLGYTSGLLKVGDGNAADRIVRLAARAGKPFFSASIKTLGQEDLQGRKVLAFAGIADPTKFFRTVETLGAGIAVRRSFGDHEHLEEDEIADILDVADRDGLEIVTTSKDYVRLIGHHGRADELLARCRVIEIAMVFDDPHAPELIIDRAIAAARERRLREGWTGKTLLPSGEK.

ATP is bound at residue 54–61 (TVGGAGKT).

Belongs to the LpxK family.

The catalysed reaction is a lipid A disaccharide + ATP = a lipid IVA + ADP + H(+). Its pathway is glycolipid biosynthesis; lipid IV(A) biosynthesis; lipid IV(A) from (3R)-3-hydroxytetradecanoyl-[acyl-carrier-protein] and UDP-N-acetyl-alpha-D-glucosamine: step 6/6. Transfers the gamma-phosphate of ATP to the 4'-position of a tetraacyldisaccharide 1-phosphate intermediate (termed DS-1-P) to form tetraacyldisaccharide 1,4'-bis-phosphate (lipid IVA). The sequence is that of Tetraacyldisaccharide 4'-kinase from Rhizobium rhizogenes (strain K84 / ATCC BAA-868) (Agrobacterium radiobacter).